A 173-amino-acid polypeptide reads, in one-letter code: Mediator of RNA polymerase II transcription subunit 10 (173 aa).

Residues Met-1 to Arg-20 show a composition bias toward polar residues. Positions Met-1–Asp-45 are disordered. The segment covering Ser-21 to Asp-45 has biased composition (basic and acidic residues).

This sequence belongs to the Mediator complex subunit 10 family. Component of the Mediator complex.

It is found in the nucleus. Component of the Mediator complex, a coactivator involved in the regulated transcription of nearly all RNA polymerase II-dependent genes. Mediator functions as a bridge to convey information from gene-specific regulatory proteins to the basal RNA polymerase II transcription machinery. Mediator is recruited to promoters by direct interactions with regulatory proteins and serves as a scaffold for the assembly of a functional preinitiation complex with RNA polymerase II and the general transcription factors. This is Mediator of RNA polymerase II transcription subunit 10 (mdt-10) from Caenorhabditis briggsae.